The chain runs to 104 residues: Large ribosomal subunit protein bL21 (104 aa).

A compositionally biased stretch (basic residues) spans 81–90 (QGYRRHHGHR). The interval 81 to 104 (QGYRRHHGHRQPYTQVKITGISAG) is disordered.

The protein belongs to the bacterial ribosomal protein bL21 family. As to quaternary structure, part of the 50S ribosomal subunit. Contacts protein L20.

In terms of biological role, this protein binds to 23S rRNA in the presence of protein L20. This chain is Large ribosomal subunit protein bL21, found in Halorhodospira halophila (strain DSM 244 / SL1) (Ectothiorhodospira halophila (strain DSM 244 / SL1)).